Here is an 877-residue protein sequence, read N- to C-terminus: DNA polymerase I (877 aa).

One can recognise a 5'-3' exonuclease domain in the interval 177–270 (TPAQFIDLKA…LEDLVYSGPD (94 aa)). A 3'-5' exonuclease domain is found at 302–465 (DFTIVDQISQ…TEPILLEKLS (164 aa)).

This sequence belongs to the DNA polymerase type-A family. In terms of assembly, single-chain monomer with multiple functions.

It catalyses the reaction DNA(n) + a 2'-deoxyribonucleoside 5'-triphosphate = DNA(n+1) + diphosphate. In terms of biological role, in addition to polymerase activity, this DNA polymerase exhibits 3'-5' and 5'-3' exonuclease activity. This is DNA polymerase I (polA) from Streptococcus pneumoniae serotype 4 (strain ATCC BAA-334 / TIGR4).